A 203-amino-acid chain; its full sequence is MITTQTLPTLQPSDTSWVILAGGQASRMGGQDKGLIQLNGQPLVQHVIDKLAPQTPTLLINANRNQSQYQQFAPVISDEFPDYPGPLGGIHAGLSHAPTDWVGFVPCDSPLICDDLVARFCQAVKPESDILVAHDGEHQQPVFTLFHKRVLPKLSAFLARGDRKIILLYDECHTSYVDFSDAPSCFFNLNTPQELAQFGALHP.

Residues 20 to 22 (LAG), lysine 33, asparagine 61, aspartate 78, and aspartate 108 contribute to the GTP site. Position 108 (aspartate 108) interacts with Mg(2+).

Belongs to the MobA family. Monomer. The cofactor is Mg(2+).

The protein resides in the cytoplasm. The catalysed reaction is Mo-molybdopterin + GTP + H(+) = Mo-molybdopterin guanine dinucleotide + diphosphate. Transfers a GMP moiety from GTP to Mo-molybdopterin (Mo-MPT) cofactor (Moco or molybdenum cofactor) to form Mo-molybdopterin guanine dinucleotide (Mo-MGD) cofactor. The protein is Molybdenum cofactor guanylyltransferase of Vibrio cholerae serotype O1 (strain ATCC 39315 / El Tor Inaba N16961).